We begin with the raw amino-acid sequence, 160 residues long: Protein cornichon homolog 2 (160 aa).

The Cytoplasmic segment spans residues 1 to 10; it reads MAFTFAAFCY. A helical membrane pass occupies residues 11-31; sequence MLTLVLCAALIFFVIWQIIAF. At 32 to 72 the chain is on the lumenal side; the sequence is DELRTDFKNPIDQSNPTRARERILNIERICNLLRRLVVPEY. Residues 73–93 traverse the membrane as a helical segment; it reads SIHGLFCLMFMCAGEWVTLGL. Residues 94–138 are Cytoplasmic-facing; sequence NIPLLLYHLWRFFHRPADGSEVMYDPVSVMNADILNYCQKESWCK. A helical transmembrane segment spans residues 139–159; sequence LGFYLLSFFYYLYSMVYALVS. A topological domain (lumenal) is located at residue Phe-160.

The protein belongs to the cornichon family.

The protein resides in the membrane. Its function is as follows. Regulates the trafficking and gating properties of AMPA-selective glutamate receptors (AMPARs). The polypeptide is Protein cornichon homolog 2 (cnih2) (Danio rerio (Zebrafish)).